The chain runs to 435 residues: Nucleoredoxin (435 aa).

Ser2 bears the N-acetylserine mark. In terms of domain architecture, Thioredoxin spans 167 to 314 (PKPFREVIAG…FPWHPKPVLE (148 aa)).

This sequence belongs to the nucleoredoxin family. As to quaternary structure, associates with the phosphatase 2A holoenzyme. Interacts with PPP2CA; the interaction is direct. Interacts with DVL1 (via PDZ domain); the interaction is direct and regulated by oxidative stress. As to expression, widely expressed with higher expression in testis and skin.

It is found in the cytoplasm. It localises to the cytosol. The protein localises to the nucleus. The enzyme catalyses [protein]-dithiol + NAD(+) = [protein]-disulfide + NADH + H(+). It catalyses the reaction [protein]-dithiol + NADP(+) = [protein]-disulfide + NADPH + H(+). Functionally, functions as a redox-dependent negative regulator of the Wnt signaling pathway, possibly by preventing ubiquitination of DVL3 by the BCR(KLHL12) complex. May also function as a transcriptional regulator act as a regulator of protein phosphatase 2A (PP2A). This is Nucleoredoxin (Nxn) from Mus musculus (Mouse).